The following is a 274-amino-acid chain: Kit ligand (274 aa).

The first 25 residues, 1–25, serve as a signal peptide directing secretion; sequence MKKTQTWIITCIYLQLLLFNPLVKT. Over 26-215 the chain is Extracellular; the sequence is KGICENRVTD…SNFTGDSNLQ (190 aa). Intrachain disulfides connect Cys-29-Cys-114 and Cys-68-Cys-164. Residues Asn-90, Asn-97, Asn-145, Asn-196, and Asn-207 are each glycosylated (N-linked (GlcNAc...) asparagine). The helical transmembrane segment at 216–238 threads the bilayer; that stretch reads WAAMALPAFFSLVIGFAFGALYW. Over 239 to 274 the chain is Cytoplasmic; sequence KKKQPNLTRAVENIQINEEDNEISMLQEKEREFQEV.

It belongs to the SCF family. In terms of assembly, homodimer, non-covalently linked. A soluble form is produced by proteolytic processing of the extracellular domain.

The protein localises to the cytoplasm. It localises to the cytoskeleton. It is found in the cell membrane. Its subcellular location is the cell projection. The protein resides in the lamellipodium. The protein localises to the filopodium. It localises to the secreted. Functionally, stimulates the proliferation of mast cells. Able to augment the proliferation of both myeloid and lymphoid hematopoietic progenitors in bone marrow culture. Also mediates cell-cell adhesion. Acts synergistically with other cytokines, probably interleukins. This is Kit ligand (KITLG) from Equus caballus (Horse).